A 170-amino-acid polypeptide reads, in one-letter code: RNA pyrophosphohydrolase (170 aa).

The 144-residue stretch at 6–149 (GFRPNVGIVI…KRDVYRRALK (144 aa)) folds into the Nudix hydrolase domain. The Nudix box signature appears at 38 to 59 (GGIDDGETPEQAMYRELYEEVG).

Belongs to the Nudix hydrolase family. RppH subfamily. A divalent metal cation is required as a cofactor.

Accelerates the degradation of transcripts by removing pyrophosphate from the 5'-end of triphosphorylated RNA, leading to a more labile monophosphorylated state that can stimulate subsequent ribonuclease cleavage. In Aliivibrio fischeri (strain ATCC 700601 / ES114) (Vibrio fischeri), this protein is RNA pyrophosphohydrolase.